Here is a 34-residue protein sequence, read N- to C-terminus: Photosystem II reaction center protein M (34 aa).

Residues 5 to 25 (ILAFIAIVLFISVPTAFLLII) traverse the membrane as a helical segment.

This sequence belongs to the PsbM family. In terms of assembly, PSII is composed of 1 copy each of membrane proteins PsbA, PsbB, PsbC, PsbD, PsbE, PsbF, PsbH, PsbI, PsbJ, PsbK, PsbL, PsbM, PsbT, PsbX, PsbY, PsbZ, Psb30/Ycf12, at least 3 peripheral proteins of the oxygen-evolving complex and a large number of cofactors. It forms dimeric complexes.

The protein localises to the plastid. It is found in the chloroplast thylakoid membrane. Functionally, one of the components of the core complex of photosystem II (PSII). PSII is a light-driven water:plastoquinone oxidoreductase that uses light energy to abstract electrons from H(2)O, generating O(2) and a proton gradient subsequently used for ATP formation. It consists of a core antenna complex that captures photons, and an electron transfer chain that converts photonic excitation into a charge separation. This subunit is found at the monomer-monomer interface. The sequence is that of Photosystem II reaction center protein M from Cycas taitungensis (Prince sago).